Reading from the N-terminus, the 718-residue chain is NF-kappa-B inhibitor zeta (718 aa).

The span at 1-17 (MIVDKLLDDSRGGEGLR) shows a compositional bias: basic and acidic residues. Disordered stretches follow at residues 1–20 (MIVD…RDAA) and 58–108 (SAPG…RQQR). Residues 58–83 (SAPGSPGSDSSDFSSASSVSSCGAVE) show a composition bias toward low complexity. Basic and acidic residues predominate over residues 84–97 (SRSRGGARAERQPV). In terms of domain architecture, OCA spans 108–130 (RGPFQGVRVKNSVKELLLHIRSH). Positions 164–179 (KRKGPDSLSDGPACKR) match the Nuclear localization signal motif. The disordered stretch occupies residues 186-211 (QFLTPPQTPTPGESMEDVHLNEPKQE). A compositionally biased stretch (basic and acidic residues) spans 201–211 (EDVHLNEPKQE). The segment at 321-394 (AYEPNLFDGP…MVGHEMASDS (74 aa)) is required for transcriptional activity. The interaction with NFKB1/p50 stretch occupies residues 404 to 718 (MGNPMNTTQL…KSIQQRAPPY (315 aa)). 7 ANK repeats span residues 443 to 472 (DGDT…ALHM), 479 to 508 (NGQS…QVNT), 512 to 541 (WGRT…GSNQ), 551 to 580 (DGLT…HSPE), 582 to 607 (QELL…AVEA), 612 to 641 (SGRT…CLSF), and 648 to 681 (NGNT…DPST).

Interacts with NFKB1/p50. Interacts with RELA. Interacts with AKIRIN2. Expressed at high levels in peripheral blood leukocytes and lung, at moderate levels in liver, placenta, and at low levels in spleen, kidney, skeletal muscle and heart.

It localises to the nucleus. In terms of biological role, involved in regulation of NF-kappa-B transcription factor complexes. Inhibits NF-kappa-B activity without affecting its nuclear translocation upon stimulation. Inhibits DNA-binding of RELA and NFKB1/p50, and of the NF-kappa-B p65-p50 heterodimer and the NF-kappa-B p50-p50 homodimer. Also seems to activate NF-kappa-B-mediated transcription. In vitro, upon association with NFKB1/p50 has transcriptional activation activity and, together with NFKB1/p50 and RELA, is recruited to LCN2 promoters. Promotes transcription of LCN2 and DEFB4. Is recruited to IL-6 promoters and activates IL-6 but decreases TNF-alpha production in response to LPS. Seems to be involved in the induction of inflammatory genes activated through TLR/IL-1 receptor signaling. Involved in the induction of T helper 17 cells (Th17) differentiation upon recognition of antigen by T cell antigen receptor (TCR). In Homo sapiens (Human), this protein is NF-kappa-B inhibitor zeta (NFKBIZ).